The chain runs to 239 residues: Acyl-protein thioesterase 1 (239 aa).

Residues Ser124, Asp180, and His213 each act as charge relay system in the active site.

It belongs to the AB hydrolase superfamily. AB hydrolase 2 family.

The protein localises to the cytoplasm. It localises to the nucleus. The enzyme catalyses S-hexadecanoyl-L-cysteinyl-[protein] + H2O = L-cysteinyl-[protein] + hexadecanoate + H(+). Hydrolyzes fatty acids from S-acylated cysteine residues in proteins with a strong preference for palmitoylated G-alpha proteins over other acyl substrates. Mediates the deacylation of G-alpha proteins such as GPA1 in vivo, but has weak or no activity toward palmitoylated Ras proteins. Has weak lysophospholipase activity in vitro; however such activity may not exist in vivo. This is Acyl-protein thioesterase 1 from Emericella nidulans (strain FGSC A4 / ATCC 38163 / CBS 112.46 / NRRL 194 / M139) (Aspergillus nidulans).